A 104-amino-acid chain; its full sequence is Putative heat shock protein PS1 (104 aa).

Residues Asn11 and Asn18 are each glycosylated (N-linked (GlcNAc...) asparagine). Residue Asn18 coordinates ATP.

It belongs to the heat shock protein 90 family. As to quaternary structure, homodimer.

It localises to the cytoplasm. In terms of biological role, putative molecular chaperone that may promote the maturation, structural maintenance and proper regulation of specific target proteins. This is Putative heat shock protein PS1 from Pinus strobus (Eastern white pine).